Here is an 81-residue protein sequence, read N- to C-terminus: Cytotoxin 1c (81 aa).

An N-terminal signal peptide occupies residues 1-21 (MKTLLLTLVVVTIVCLDLGYT). Cystine bridges form between C24–C42, C35–C59, C63–C74, and C75–C80.

This sequence belongs to the three-finger toxin family. Short-chain subfamily. Type IA cytotoxin sub-subfamily. Monomer in solution; Homodimer and oligomer in the presence of negatively charged lipids forming a pore with a size ranging between 20 and 30 Angstroms. Expressed by the venom gland.

Its subcellular location is the secreted. The protein resides in the target cell membrane. Functionally, shows cytolytic activity on many different cells by forming pore in lipid membranes. In vivo, increases heart rate or kills the animal by cardiac arrest. In addition, it binds to heparin with high affinity, interacts with Kv channel-interacting protein 1 (KCNIP1) in a calcium-independent manner, and binds to integrin alpha-V/beta-3 (ITGAV/ITGB3) with moderate affinity. The sequence is that of Cytotoxin 1c from Naja atra (Chinese cobra).